We begin with the raw amino-acid sequence, 332 residues long: CMRF35-like molecule 1 (332 aa).

The N-terminal stretch at 1–18 is a signal peptide; the sequence is MHLSLLALFLFWISGCFT. Over 19–181 the chain is Extracellular; sequence AQDPVTGPEE…GDGNGFLDLS (163 aa). The 104-residue stretch at 22 to 125 folds into the Ig-like V-type domain; it reads PVTGPEEVSG…YDHMFKVHVS (104 aa). Disulfide bonds link Cys-41-Cys-109 and Cys-55-Cys-63. N-linked (GlcNAc...) asparagine glycosylation occurs at Asn-89. Residues 182-202 form a helical membrane-spanning segment; it reads VLLPVISAALLLLLLVVSLIA. Residues 203-332 are Cytoplasmic-facing; sequence WRMVRRQKKA…EYSSIRRPMP (130 aa). Disordered stretches follow at residues 251 to 270 and 313 to 332; these read PRTSPLKKGSSMSSSGKDHQ and PRTNLGEETTEYSSIRRPMP.

Belongs to the CD300 family. Interacts with PTPN6/SHP-1 in a tyrosine phosphorylation dependent manner. Interacts with IL4R. Phosphorylated on tyrosine.

The protein resides in the cell membrane. Functionally, acts as an inhibitory receptor for myeloid cells and mast cells. Positively regulates the phagocytosis of apoptotic cells (efferocytosis) via phosphatidylserine (PS) recognition; recognizes and binds PS as a ligand which is expressed on the surface of apoptotic cells. Plays an important role in the maintenance of immune homeostasis, by promoting macrophage-mediated efferocytosis and by inhibiting dendritic cell-mediated efferocytosis. Negatively regulates Fc epsilon receptor-dependent mast cell activation and allergic responses via binding to ceramide and sphingomyelin which act as ligands. May act as a coreceptor for interleukin 4 (IL-4). Associates with and regulates IL-4 receptor alpha-mediated responses by augmenting IL-4- and IL-13-induced signaling. Negatively regulates the Toll-like receptor (TLR) signaling mediated by MYD88 and TRIF through activation of PTPN6/SHP-1 and PTPN11/SHP-2. Inhibits osteoclast formation. Induces macrophage cell death upon engagement. This chain is CMRF35-like molecule 1 (Cd300lf), found in Rattus norvegicus (Rat).